Reading from the N-terminus, the 441-residue chain is ATP-dependent protease ATPase subunit HslU (441 aa).

ATP is bound by residues V18, 60–65 (GVGKTE), D253, E319, and R391.

This sequence belongs to the ClpX chaperone family. HslU subfamily. A double ring-shaped homohexamer of HslV is capped on each side by a ring-shaped HslU homohexamer. The assembly of the HslU/HslV complex is dependent on binding of ATP.

It localises to the cytoplasm. ATPase subunit of a proteasome-like degradation complex; this subunit has chaperone activity. The binding of ATP and its subsequent hydrolysis by HslU are essential for unfolding of protein substrates subsequently hydrolyzed by HslV. HslU recognizes the N-terminal part of its protein substrates and unfolds these before they are guided to HslV for hydrolysis. This Nitratidesulfovibrio vulgaris (strain DP4) (Desulfovibrio vulgaris) protein is ATP-dependent protease ATPase subunit HslU.